The sequence spans 607 residues: UvrABC system protein C (607 aa).

Residues 16-94 form the GIY-YIG domain; that stretch reads GRPGVYRMFD…IKEWRPPYNI (79 aa). Positions 203–238 constitute a UVR domain; it reads HALTNELSTAMEEAAINLEFERAAELRDQIALLRRV.

The protein belongs to the UvrC family. Interacts with UvrB in an incision complex.

It localises to the cytoplasm. In terms of biological role, the UvrABC repair system catalyzes the recognition and processing of DNA lesions. UvrC both incises the 5' and 3' sides of the lesion. The N-terminal half is responsible for the 3' incision and the C-terminal half is responsible for the 5' incision. This chain is UvrABC system protein C, found in Pseudomonas fluorescens (strain Pf0-1).